The primary structure comprises 100 residues: MAKKSLIQREKKRQKLEQKYHLIRRSSKKEISKIPSLSGKWEIHGKLQSLPRNSAATRLHRRCFSTGRPRANYRDFGLSGHILREMVHACLLPGATRSSW.

It belongs to the universal ribosomal protein uS14 family. Part of the 30S ribosomal subunit.

It is found in the plastid. Its subcellular location is the chloroplast. In terms of biological role, binds 16S rRNA, required for the assembly of 30S particles. The polypeptide is Small ribosomal subunit protein uS14c (Platanus occidentalis (Sycamore)).